We begin with the raw amino-acid sequence, 183 residues long: Histone deacetylase complex subunit SAP30L (183 aa).

Met-1 carries the post-translational modification N-acetylmethionine. Residues Met-1–Ser-10 are compositionally biased toward acidic residues. Positions Met-1–Pro-23 are disordered. Disulfide bonds link Cys-29/Cys-30 and Cys-38/Cys-74. The Atypical zinc finger occupies Cys-29 to His-77. Residue Lys-49 forms a Glycyl lysine isopeptide (Lys-Gly) (interchain with G-Cter in SUMO2) linkage. Residues Arg-85–Asp-105 form a disordered region. A Nuclear localization signal (NLS) motif is present at residues Asn-86 to Lys-91. The tract at residues Arg-88–Arg-90 is important for DNA and phosphoinositide binding. Thr-92 is subject to Phosphothreonine. A phosphoserine mark is found at Ser-93 and Ser-99. Position 104 is a phosphothreonine (Thr-104). Residues Lys-155, Lys-166, and Lys-175 each participate in a glycyl lysine isopeptide (Lys-Gly) (interchain with G-Cter in SUMO2) cross-link.

It belongs to the SAP30 family. In terms of assembly, interacts with components of the histone deacetylase complex SIN3A, HDAC1 and HDAC2. Binds histones and nucleosomes. Interacts with FEZ1. In terms of tissue distribution, detected in brain and ovary, and at lower levels in heart, small intestine, lung, kidney, skeletal muscle, stomach and spleen (at protein level). Ubiquitous; expressed in all tissues tested with highest levels in testis.

It is found in the nucleus. It localises to the nucleolus. Its function is as follows. Functions as a transcription repressor, probably via its interaction with histone deacetylase complexes. Involved in the functional recruitment of the class 1 Sin3-histone deacetylase complex (HDAC) to the nucleolus. Binds DNA, apparently without sequence-specificity, and bends bound double-stranded DNA. Binds phosphoinositol phosphates (phosphoinositol 3-phosphate, phosphoinositol 4-phosphate and phosphoinositol 5-phosphate) via the same basic sequence motif that mediates DNA binding and nuclear import. In terms of biological role, functions as a transcription repressor; isoform 2 has lower transcription repressor activity than isoform 1 and isoform 3. Functionally, functions as a transcription repressor; its activity is marginally lower than that of isoform 1. This Homo sapiens (Human) protein is Histone deacetylase complex subunit SAP30L (SAP30L).